The following is a 489-amino-acid chain: Homoserine O-acetyltransferase (489 aa).

The AB hydrolase-1 domain occupies 63–435 (NALVICHALS…SPEGHDAFLL (373 aa)). The active site involves S162. The Nucleophile role is filled by S162. The interval 247–272 (RFGRNVPDPSKRQNINGTERLPTPPN) is disordered. Catalysis depends on residues D401 and H430.

This sequence belongs to the AB hydrolase superfamily. MetX family.

It catalyses the reaction L-homoserine + acetyl-CoA = O-acetyl-L-homoserine + CoA. It functions in the pathway amino-acid biosynthesis; L-methionine biosynthesis via de novo pathway; O-acetyl-L-homoserine from L-homoserine: step 1/1. In terms of biological role, commits homoserine to the methionine biosynthesis pathway by catalyzing its O-acetylation. In Emericella nidulans (strain FGSC A4 / ATCC 38163 / CBS 112.46 / NRRL 194 / M139) (Aspergillus nidulans), this protein is Homoserine O-acetyltransferase (metE).